Here is a 1324-residue protein sequence, read N- to C-terminus: Tetratricopeptide repeat protein 21 homolog (1324 aa).

16 TPR repeats span residues 58 to 91 (PALA…NDVA), 414 to 446 (SPLY…LVEM), 582 to 615 (SLYH…PRKE), 669 to 702 (DQLV…QSNF), 737 to 770 (PGSY…QSKD), 772 to 804 (QLAE…YKDK), 806 to 837 (MRLK…DPEP), 847 to 880 (IQFL…HSRI), 894 to 927 (ARIC…HETD), 929 to 961 (KANL…DPHN), 963 to 995 (EANS…NPQH), 997 to 1029 (HALS…NPRC), 1033 to 1066 (SGYN…AAGW), 1205 to 1238 (EKCW…NCNC), 1240 to 1272 (KAFE…TKER), and 1274 to 1307 (PGFG…NPQY).

This sequence belongs to the TTC21 family. As to quaternary structure, component of the IFT complex A (IFT-A) composed of at least che-11, daf-10, dyf-2, ift-139, ift-43 and ifta-1. Expressed in ciliated sensory neurons in the head and tail.

It localises to the cell projection. The protein resides in the cilium. The protein localises to the cytoplasm. It is found in the cytoskeleton. Its subcellular location is the cilium basal body. It localises to the dendrite. Its function is as follows. Component of the IFT complex A (IFT-A), a complex required for retrograde ciliary transport. In particular, may act redundantly with the intraflagellar transport protein ift-43 to regulate the transport of specific ciliary cargo proteins such as che-3 which are related to motility. Functions in cilia biogenesis. This Caenorhabditis elegans protein is Tetratricopeptide repeat protein 21 homolog.